The chain runs to 214 residues: Rac-like GTP-binding protein 1 (214 aa).

GTP contacts are provided by residues 17-24 (GDGAVGKT), 20-25 (AVGKTC), threonine 42, 64-68 (DTAGQ), glycine 67, 122-125 (TKLD), 123-125 (KLD), and 164-165 (SK). The Effector region signature appears at 39-47 (YIPTVFDNF).

Belongs to the small GTPase superfamily. Rho family. As to quaternary structure, may interact with MPK1/MAPK6. Binds to RBOHB, preferentially in the GTP-bound form. Interacts with CCR1 in a GTP-dependent manner. Post-translationally, may be palmitoylated.

Its subcellular location is the cytoplasm. The protein resides in the membrane. Its function is as follows. Small GTPase playing a general role in disease resistance signaling pathway. Acts downstream of heterotrimeric G protein alpha subunit. Regulates cell death and reactive oxygen species production, probably through NADPH oxidase. Also involved in sphingolipid elicitor (SE)-dependent defense signaling. Activates phytoalexin production and alters defense-related genes. Down-regulates metallothionein 2b, a reactive oxygen scavenger. May control lignin synthesis through regulation of both NADPH oxidase and CCR1 activities during defense responses. Stimulates lignin synthesis in suspension cell culture. The protein is Rac-like GTP-binding protein 1 (RAC1) of Oryza sativa subsp. japonica (Rice).